Consider the following 313-residue polypeptide: Ribosomal RNA small subunit methyltransferase H (313 aa).

S-adenosyl-L-methionine is bound by residues 35 to 37, D55, F81, D103, and Q110; that span reads GGH.

This sequence belongs to the methyltransferase superfamily. RsmH family.

It is found in the cytoplasm. The enzyme catalyses cytidine(1402) in 16S rRNA + S-adenosyl-L-methionine = N(4)-methylcytidine(1402) in 16S rRNA + S-adenosyl-L-homocysteine + H(+). In terms of biological role, specifically methylates the N4 position of cytidine in position 1402 (C1402) of 16S rRNA. This chain is Ribosomal RNA small subunit methyltransferase H, found in Pseudomonas syringae pv. syringae (strain B728a).